The primary structure comprises 156 residues: Transcriptional repressor NrdR (156 aa).

The segment at 3–34 is a zinc-finger region; the sequence is CPYCGHLDNKVIDSRINKDATITRRRRSCLAC. Positions 49-139 constitute an ATP-cone domain; it reads PMLVKKDGRR…VYRQFKDVDE (91 aa).

The protein belongs to the NrdR family. Zn(2+) is required as a cofactor.

Functionally, negatively regulates transcription of bacterial ribonucleotide reductase nrd genes and operons by binding to NrdR-boxes. This is Transcriptional repressor NrdR from Desulfotalea psychrophila (strain LSv54 / DSM 12343).